The chain runs to 63 residues: Cecropin-C (63 aa).

Positions 1–23 are cleaved as a signal peptide; sequence MNFYKIFVFVALILAISIGQSEA. Position 62 is an arginine amide (Arg62).

Belongs to the cecropin family.

It is found in the secreted. Cecropins have lytic and antibacterial activity against several Gram-positive and Gram-negative bacteria. In Drosophila mauritiana (Fruit fly), this protein is Cecropin-C (CecC).